The chain runs to 222 residues: MQPSFWHEKWDAQQIGFHLSAVNPLLIQFWSQLKLPANSQVFVPLCGKSLDMCFLAEQGHDVLACELNDLAVSQFYQENNLTHTVEKVGEHKRYSTEQITIYQGDIFSLQNTNSVELAKTSAFYDRAALIAWPEAMRLQYAQQLACLIPAGSVGLLVTLDYPQAELNGPPFSVSDDWMQANMGADFEIERLACEDVLSDNPRFVKKQVSSLTESVYKLTRKG.

Positions 10, 45, 66, and 126 each coordinate S-adenosyl-L-methionine.

Belongs to the class I-like SAM-binding methyltransferase superfamily. TPMT family.

It localises to the cytoplasm. The catalysed reaction is S-adenosyl-L-methionine + a thiopurine = S-adenosyl-L-homocysteine + a thiopurine S-methylether.. In Shewanella piezotolerans (strain WP3 / JCM 13877), this protein is Thiopurine S-methyltransferase.